The primary structure comprises 143 residues: Large ribosomal subunit protein uL11 (143 aa).

It belongs to the universal ribosomal protein uL11 family. In terms of assembly, part of the ribosomal stalk of the 50S ribosomal subunit. Interacts with L10 and the large rRNA to form the base of the stalk. L10 forms an elongated spine to which L12 dimers bind in a sequential fashion forming a multimeric L10(L12)X complex. In terms of processing, one or more lysine residues are methylated.

Its function is as follows. Forms part of the ribosomal stalk which helps the ribosome interact with GTP-bound translation factors. This chain is Large ribosomal subunit protein uL11, found in Cupriavidus metallidurans (strain ATCC 43123 / DSM 2839 / NBRC 102507 / CH34) (Ralstonia metallidurans).